We begin with the raw amino-acid sequence, 139 residues long: Putative pre-16S rRNA nuclease (139 aa).

Belongs to the YqgF nuclease family.

It localises to the cytoplasm. In terms of biological role, could be a nuclease involved in processing of the 5'-end of pre-16S rRNA. The polypeptide is Putative pre-16S rRNA nuclease (Thermoanaerobacter pseudethanolicus (strain ATCC 33223 / 39E) (Clostridium thermohydrosulfuricum)).